A 638-amino-acid chain; its full sequence is tRNA uridine 5-carboxymethylaminomethyl modification enzyme MnmG (638 aa).

FAD is bound by residues 15 to 20, Ile127, and Ser182; that span reads GAGHAG. An NAD(+)-binding site is contributed by 276 to 290; sequence GPRYCPSIEDKIVRF. Gln373 is an FAD binding site.

Belongs to the MnmG family. Homodimer. Heterotetramer of two MnmE and two MnmG subunits. FAD serves as cofactor.

The protein localises to the cytoplasm. NAD-binding protein involved in the addition of a carboxymethylaminomethyl (cmnm) group at the wobble position (U34) of certain tRNAs, forming tRNA-cmnm(5)s(2)U34. This is tRNA uridine 5-carboxymethylaminomethyl modification enzyme MnmG from Streptococcus suis (strain 98HAH33).